Reading from the N-terminus, the 198-residue chain is uncharacterized protein (198 aa).

The N-terminal stretch at 1-28 (MHPTQRKLMKRIILFLSLLFCIACPAIA) is a signal peptide.

The protein belongs to the fimbrial protein family.

Its subcellular location is the fimbrium. Part of the yadCKLM-htrE-yadVN fimbrial operon. Could contribute to adhesion to various surfaces in specific environmental niches. This is an uncharacterized protein from Escherichia coli (strain K12).